The following is a 682-amino-acid chain: Methionine--tRNA ligase (682 aa).

Residues 14–24 (PYANGSIHLGH) carry the 'HIGH' region motif. Residues Cys145, Cys148, Cys158, and Cys161 each coordinate Zn(2+). Residues 331–335 (KMSKS) carry the 'KMSKS' region motif. Lys334 lines the ATP pocket. Residues 580–682 (AFAAVDLRVA…SGAKPGQRIK (103 aa)) enclose the tRNA-binding domain.

This sequence belongs to the class-I aminoacyl-tRNA synthetase family. MetG type 1 subfamily. Homodimer. The cofactor is Zn(2+).

The protein resides in the cytoplasm. The catalysed reaction is tRNA(Met) + L-methionine + ATP = L-methionyl-tRNA(Met) + AMP + diphosphate. Is required not only for elongation of protein synthesis but also for the initiation of all mRNA translation through initiator tRNA(fMet) aminoacylation. In Pseudomonas savastanoi pv. phaseolicola (strain 1448A / Race 6) (Pseudomonas syringae pv. phaseolicola (strain 1448A / Race 6)), this protein is Methionine--tRNA ligase.